A 470-amino-acid polypeptide reads, in one-letter code: O-acyltransferase pboC (470 aa).

Catalysis depends on proton acceptor residues His-149 and Asp-386.

Belongs to the plant acyltransferase family. Monomer.

Its pathway is secondary metabolite biosynthesis. Functionally, O-acetyltransferase; part of the gene cluster that mediates the biosynthesis of protubonine B, a hydroxylated and diacetylated cyclo-L-Trp-L-Leu derivative. Within the pathway, pboC catalyzes the acetylation of protubonine D at the hydroxy group to produce protubonine C. The first step of the protubonine B synthesis is performed by the nonribosomal peptide synthetase pboA that catalyzes the formation of cyclo-L-Trp-L-Leu by condensing L-Leu with L-Trp. The flavin-dependent monooxygenase pboD is responsible for hydroxylation at C-3 of the indole ring and subsequent formation of the pyrrolidine ring, leadind to protubonine D. Protubonine D is further diacetylated by two acetyltransferases, pboB and pboC, to form the final product protubonine B via protubonine C. In Aspergillus ustus, this protein is O-acyltransferase pboC.